The following is a 325-amino-acid chain: MKIFDYEDVQLIPNKCIVKSRSECDTSVQFGPKRFKLPVVPANMQTVMNEKLAEWFAENDYFYIMHRFDEEGRIPFIKKMQDKGLFASISVGVKDKEYDFVRELAEEGLKPEYITIDIAHGHSEQVINMIRQIKSYLPETFVIAGNVGTPEGVRELENAGADATKVGIGPGRVCITKIKTGFGTGGWQLAAINHCSKAARKPMIADGGIRTHGDIAKSIRFGASMVMVGSLFAAHEESPGETVELDGKLYKEYFGSASEFQKGEHKNVEGKKMFVEHKGTLADTLTEMQQDLQSSISYAGGKDLDSLRKVDYVIVRNSIFNGDRD.

C174 serves as the catalytic Thioimidate intermediate. M203–V226 provides a ligand contact to NADP(+).

Belongs to the IMPDH/GMPR family. GuaC type 2 subfamily.

It catalyses the reaction IMP + NH4(+) + NADP(+) = GMP + NADPH + 2 H(+). In terms of biological role, catalyzes the irreversible NADPH-dependent deamination of GMP to IMP. It functions in the conversion of nucleobase, nucleoside and nucleotide derivatives of G to A nucleotides, and in maintaining the intracellular balance of A and G nucleotides. This Staphylococcus carnosus (strain TM300) protein is GMP reductase.